Consider the following 419-residue polypeptide: UDP-N-acetylglucosamine 1-carboxyvinyltransferase (419 aa).

22–23 is a phosphoenolpyruvate binding site; sequence KN. Arg91 is a UDP-N-acetyl-alpha-D-glucosamine binding site. The Proton donor role is filled by Cys115. Cys115 carries the 2-(S-cysteinyl)pyruvic acid O-phosphothioketal modification. UDP-N-acetyl-alpha-D-glucosamine contacts are provided by residues 120-124, 160-163, Asp305, and Ile327; these read RPVDL and KVSV.

The protein belongs to the EPSP synthase family. MurA subfamily.

The protein localises to the cytoplasm. It carries out the reaction phosphoenolpyruvate + UDP-N-acetyl-alpha-D-glucosamine = UDP-N-acetyl-3-O-(1-carboxyvinyl)-alpha-D-glucosamine + phosphate. Its pathway is cell wall biogenesis; peptidoglycan biosynthesis. Functionally, cell wall formation. Adds enolpyruvyl to UDP-N-acetylglucosamine. This Serratia proteamaculans (strain 568) protein is UDP-N-acetylglucosamine 1-carboxyvinyltransferase.